The sequence spans 360 residues: DNA polymerase IV (360 aa).

The UmuC domain maps to 8–189 (IIHVDMDCFF…LPLEKIPGVG (182 aa)). Asp12 and Asp107 together coordinate Mg(2+). Glu108 is a catalytic residue.

This sequence belongs to the DNA polymerase type-Y family. In terms of assembly, monomer. Mg(2+) is required as a cofactor.

The protein localises to the cytoplasm. It carries out the reaction DNA(n) + a 2'-deoxyribonucleoside 5'-triphosphate = DNA(n+1) + diphosphate. In terms of biological role, poorly processive, error-prone DNA polymerase involved in untargeted mutagenesis. Copies undamaged DNA at stalled replication forks, which arise in vivo from mismatched or misaligned primer ends. These misaligned primers can be extended by PolIV. Exhibits no 3'-5' exonuclease (proofreading) activity. May be involved in translesional synthesis, in conjunction with the beta clamp from PolIII. This chain is DNA polymerase IV, found in Vibrio cholerae serotype O1 (strain ATCC 39315 / El Tor Inaba N16961).